We begin with the raw amino-acid sequence, 240 residues long: Urease accessory protein UreF (240 aa).

Belongs to the UreF family. UreD, UreF and UreG form a complex that acts as a GTP-hydrolysis-dependent molecular chaperone, activating the urease apoprotein by helping to assemble the nickel containing metallocenter of UreC. The UreE protein probably delivers the nickel.

It is found in the cytoplasm. Functionally, required for maturation of urease via the functional incorporation of the urease nickel metallocenter. This is Urease accessory protein UreF from Rhodopseudomonas palustris (strain TIE-1).